The primary structure comprises 326 residues: Holliday junction branch migration complex subunit RuvB (326 aa).

The tract at residues 1–180 (MRSISCSKEY…FGIPLRLEFY (180 aa)) is large ATPase domain (RuvB-L). ATP contacts are provided by residues Ile-19, Arg-20, Gly-61, Lys-64, Thr-65, Thr-66, 127–129 (EDF), Arg-170, Tyr-180, and Arg-217. Thr-65 lines the Mg(2+) pocket. Positions 181-251 (SFEELVDIIK…IADSALSKLG (71 aa)) are small ATPAse domain (RuvB-S). A head domain (RuvB-H) region spans residues 254-326 (KMGLNKLDVD…QGKEYLSLQY (73 aa)). Residues Arg-307 and Arg-312 each coordinate DNA.

Belongs to the RuvB family. As to quaternary structure, homohexamer. Forms an RuvA(8)-RuvB(12)-Holliday junction (HJ) complex. HJ DNA is sandwiched between 2 RuvA tetramers; dsDNA enters through RuvA and exits via RuvB. An RuvB hexamer assembles on each DNA strand where it exits the tetramer. Each RuvB hexamer is contacted by two RuvA subunits (via domain III) on 2 adjacent RuvB subunits; this complex drives branch migration. In the full resolvosome a probable DNA-RuvA(4)-RuvB(12)-RuvC(2) complex forms which resolves the HJ.

It is found in the cytoplasm. The enzyme catalyses ATP + H2O = ADP + phosphate + H(+). The RuvA-RuvB-RuvC complex processes Holliday junction (HJ) DNA during genetic recombination and DNA repair, while the RuvA-RuvB complex plays an important role in the rescue of blocked DNA replication forks via replication fork reversal (RFR). RuvA specifically binds to HJ cruciform DNA, conferring on it an open structure. The RuvB hexamer acts as an ATP-dependent pump, pulling dsDNA into and through the RuvAB complex. RuvB forms 2 homohexamers on either side of HJ DNA bound by 1 or 2 RuvA tetramers; 4 subunits per hexamer contact DNA at a time. Coordinated motions by a converter formed by DNA-disengaged RuvB subunits stimulates ATP hydrolysis and nucleotide exchange. Immobilization of the converter enables RuvB to convert the ATP-contained energy into a lever motion, pulling 2 nucleotides of DNA out of the RuvA tetramer per ATP hydrolyzed, thus driving DNA branch migration. The RuvB motors rotate together with the DNA substrate, which together with the progressing nucleotide cycle form the mechanistic basis for DNA recombination by continuous HJ branch migration. Branch migration allows RuvC to scan DNA until it finds its consensus sequence, where it cleaves and resolves cruciform DNA. The protein is Holliday junction branch migration complex subunit RuvB of Wolbachia sp. subsp. Brugia malayi (strain TRS).